A 138-amino-acid polypeptide reads, in one-letter code: Sec-independent protein translocase protein TatB (138 aa).

The chain crosses the membrane as a helical span at residues Met-1–Gly-21. Positions Met-74–Asp-138 are disordered. Low complexity predominate over residues Gln-83–Ala-97. Residues Arg-98–Asp-138 are compositionally biased toward basic and acidic residues.

It belongs to the TatB family. In terms of assembly, the Tat system comprises two distinct complexes: a TatABC complex, containing multiple copies of TatA, TatB and TatC subunits, and a separate TatA complex, containing only TatA subunits. Substrates initially bind to the TatABC complex, which probably triggers association of the separate TatA complex to form the active translocon.

It localises to the cell inner membrane. Functionally, part of the twin-arginine translocation (Tat) system that transports large folded proteins containing a characteristic twin-arginine motif in their signal peptide across membranes. Together with TatC, TatB is part of a receptor directly interacting with Tat signal peptides. TatB may form an oligomeric binding site that transiently accommodates folded Tat precursor proteins before their translocation. The protein is Sec-independent protein translocase protein TatB of Erythrobacter litoralis (strain HTCC2594).